The sequence spans 224 residues: 7-cyano-7-deazaguanine synthase (224 aa).

Leu-9–Leu-19 contacts ATP. Positions 189, 199, 202, and 205 each coordinate Zn(2+).

The protein belongs to the QueC family. Requires Zn(2+) as cofactor.

It carries out the reaction 7-carboxy-7-deazaguanine + NH4(+) + ATP = 7-cyano-7-deazaguanine + ADP + phosphate + H2O + H(+). It participates in purine metabolism; 7-cyano-7-deazaguanine biosynthesis. Its function is as follows. Catalyzes the ATP-dependent conversion of 7-carboxy-7-deazaguanine (CDG) to 7-cyano-7-deazaguanine (preQ(0)). The sequence is that of 7-cyano-7-deazaguanine synthase from Ralstonia pickettii (strain 12J).